We begin with the raw amino-acid sequence, 100 residues long: Large ribosomal subunit protein uL23 (100 aa).

It belongs to the universal ribosomal protein uL23 family. Part of the 50S ribosomal subunit. Contacts protein L29, and trigger factor when it is bound to the ribosome.

Its function is as follows. One of the early assembly proteins it binds 23S rRNA. One of the proteins that surrounds the polypeptide exit tunnel on the outside of the ribosome. Forms the main docking site for trigger factor binding to the ribosome. The sequence is that of Large ribosomal subunit protein uL23 from Corynebacterium aurimucosum (strain ATCC 700975 / DSM 44827 / CIP 107346 / CN-1) (Corynebacterium nigricans).